A 175-amino-acid chain; its full sequence is Shikimate kinase (175 aa).

Position 11 to 16 (11 to 16 (GAGKTT)) interacts with ATP. T15 is a binding site for Mg(2+). Substrate-binding residues include D33, R57, and G79. ATP is bound at residue R118. Position 140 (R140) interacts with substrate.

This sequence belongs to the shikimate kinase family. In terms of assembly, monomer. Mg(2+) is required as a cofactor.

Its subcellular location is the cytoplasm. It carries out the reaction shikimate + ATP = 3-phosphoshikimate + ADP + H(+). It participates in metabolic intermediate biosynthesis; chorismate biosynthesis; chorismate from D-erythrose 4-phosphate and phosphoenolpyruvate: step 5/7. Catalyzes the specific phosphorylation of the 3-hydroxyl group of shikimic acid using ATP as a cosubstrate. This chain is Shikimate kinase, found in Phocaeicola vulgatus (strain ATCC 8482 / DSM 1447 / JCM 5826 / CCUG 4940 / NBRC 14291 / NCTC 11154) (Bacteroides vulgatus).